A 247-amino-acid chain; its full sequence is Golgi-associated RAB2 interactor protein 5A (247 aa).

A compositionally biased stretch (pro residues) spans 1 to 16 (MGPPLWPDLQEPPPPG). Disordered regions lie at residues 1–22 (MGPP…SQIR) and 60–92 (GDIA…PTGR).

It belongs to the GARIN family. Interacts (via N-terminus) with RAB2B (in GTP-bound form).

The protein resides in the golgi apparatus. RAB2B effector protein which promotes cytosolic DNA-induced innate immune responses. Regulates IFN responses against DNA viruses by regulating the CGAS-STING signaling axis. The sequence is that of Golgi-associated RAB2 interactor protein 5A from Homo sapiens (Human).